A 553-amino-acid polypeptide reads, in one-letter code: Formate--tetrahydrofolate ligase (553 aa).

Residue Thr62–Ser69 coordinates ATP.

The protein belongs to the formate--tetrahydrofolate ligase family.

The enzyme catalyses (6S)-5,6,7,8-tetrahydrofolate + formate + ATP = (6R)-10-formyltetrahydrofolate + ADP + phosphate. The protein operates within one-carbon metabolism; tetrahydrofolate interconversion. The chain is Formate--tetrahydrofolate ligase from Limosilactobacillus reuteri subsp. reuteri (strain JCM 1112) (Lactobacillus reuteri).